Reading from the N-terminus, the 605-residue chain is Golgi-associated RAB2 interactor protein 3 (605 aa).

Disordered regions lie at residues 234–265 (GEGI…AART) and 407–529 (YMSE…ALQK). Over residues 239 to 265 (HASHGTASAASPSTSTPGAAEGGAART) the composition is skewed to low complexity. Positions 434-457 (KKDRHPSRKSSHHRKAGESHRRRA) are enriched in basic residues. Positions 441–458 (RKSSHHRKAGESHRRRAG) match the Bipartite nuclear localization signal motif. The span at 463 to 473 (KASSHRSASGH) shows a compositional bias: polar residues. A compositionally biased stretch (basic and acidic residues) spans 475–484 (NTRDDKKEKG). Residues 489 to 500 (RGKRHGSSRKSS) are compositionally biased toward basic residues. Over residues 513 to 526 (QELGKNQSASSTGA) the composition is skewed to polar residues. Serine 592 carries the phosphoserine modification.

The protein belongs to the GARIN family. As to quaternary structure, interacts (via N-terminus) with RAB2B (in GTP-bound form). Interacts with FRG1. As to expression, expressed in adult spermatocytes and spermatids (at protein level).

It localises to the golgi apparatus. It is found in the nucleus. The protein resides in the cajal body. In terms of biological role, may be involved in RNA biogenesis. The polypeptide is Golgi-associated RAB2 interactor protein 3 (Homo sapiens (Human)).